A 310-amino-acid polypeptide reads, in one-letter code: Transcription initiation factor IIA subunit 1 (310 aa).

3 disordered regions span residues 52–78 (AISN…LSTV), 91–197 (IQLN…NNKD), and 218–261 (VIPQ…DDPD). 2 stretches are compositionally biased toward low complexity: residues 62-77 (TTAT…TLST) and 122-160 (SNGT…PSSL). Acidic residues-rich tracts occupy residues 173–183 (TLDESDNDDDN), 225–236 (LNDDDDLDDEEI), and 246–261 (DSLG…DDPD).

It belongs to the TFIIA subunit 1 family. TFIIA is a heterodimer of the large subunit 1 and a small subunit gamma.

The protein localises to the nucleus. Functionally, TFIIA is a component of the transcription machinery of RNA polymerase II and plays an important role in transcriptional activation. TFIIA in a complex with tbp mediates transcriptional activity. The sequence is that of Transcription initiation factor IIA subunit 1 (gtf2a1) from Dictyostelium discoideum (Social amoeba).